Consider the following 126-residue polypeptide: Small ribosomal subunit protein uS13 (126 aa).

The tract at residues 94–126 (GLPVRGQKTRNNAHTVKGKPKAAIAGKKKNKVN) is disordered. A compositionally biased stretch (basic residues) spans 109 to 126 (VKGKPKAAIAGKKKNKVN).

Belongs to the universal ribosomal protein uS13 family. In terms of assembly, part of the 30S ribosomal subunit. Forms a loose heterodimer with protein S19. Forms two bridges to the 50S subunit in the 70S ribosome.

Located at the top of the head of the 30S subunit, it contacts several helices of the 16S rRNA. In the 70S ribosome it contacts the 23S rRNA (bridge B1a) and protein L5 of the 50S subunit (bridge B1b), connecting the 2 subunits; these bridges are implicated in subunit movement. Contacts the tRNAs in the A and P-sites. In Aster yellows witches'-broom phytoplasma (strain AYWB), this protein is Small ribosomal subunit protein uS13.